Here is a 391-residue protein sequence, read N- to C-terminus: Chorismate synthase (391 aa).

Arg48 is an NADP(+) binding site. FMN contacts are provided by residues 126-128 (RAS), Gly286, 301-305 (KPTSS), and Arg328.

The protein belongs to the chorismate synthase family. FMNH2 is required as a cofactor.

It carries out the reaction 5-O-(1-carboxyvinyl)-3-phosphoshikimate = chorismate + phosphate. It participates in metabolic intermediate biosynthesis; chorismate biosynthesis; chorismate from D-erythrose 4-phosphate and phosphoenolpyruvate: step 7/7. Its function is as follows. Catalyzes the anti-1,4-elimination of the C-3 phosphate and the C-6 proR hydrogen from 5-enolpyruvylshikimate-3-phosphate (EPSP) to yield chorismate, which is the branch point compound that serves as the starting substrate for the three terminal pathways of aromatic amino acid biosynthesis. This reaction introduces a second double bond into the aromatic ring system. This Saccharolobus islandicus (strain Y.N.15.51 / Yellowstone #2) (Sulfolobus islandicus) protein is Chorismate synthase.